The chain runs to 1163 residues: MLSAVLLLLFFIQNVQNFDKIELEDITVYFPLKVDYLAPFGCATGTKCDDEGAAYIPSAMEIAINRLNADKDLEVFHDLDVNYVDTSKTAGPRAARTAALNNGTIAALGLMRDCYIQSTILNINSKIAVSDVCEMDLSSVKGFDQTSVLMNSQTNSLAKSVMYFLDKYQWKKVALVSPSTVLTAFATRVRSDLLDALTANKIDILVDSRLDPMSDITDKVKEDAEKARIFIICDWSSNANLLRNYLFKLGEMNKMQSGEYFVLGYISYDTNYQWLEASSGDQRLVHLGASDINDYNLTENDLHEVYKNVVILSDGPPPAEPNSTWEDIKSQVLMKKPAKMCPPYCNTTVSEKITPRWDRIKLLFDSIQYLADATNDALNIGANIYQSDIFYEYLISRKIDSVTGVTEFIDGYGAIVGSIQIYYHFSSSSHNSYSLFPCARLAQSSLLNTVWSLTDYSEGLSIDFVNKSAPKDTPVCGFYGENCGPPANNTFIIVISVGVAVLIGLAIAAAFLYKRYRYERRLHSLFFMIDRNQIILKKHTNLMSQQSLRSMASIHGSVVAASQTLRDSHFFIEDYNNASSINASSIFNTGSTARAGPFGPIPGFGGVTGASEDEKWHQIPDFGVGLYEGRTVALKRIYRSDVEFTRSIRLEIAKLQESVNSNVIEFVGMVVQSPDVFVVYELAQRGSLKDILDNDDMPLDDVFRSQMTKDIIAGLEYLHSSPIGCHGRLKSTNCLIDARWMVRLSSFGLRELRGEETWQQEDDVQEGKDQLWTSPELLRWSTGLSQCGVLLVQKSDVYSLAIVLYELFGRLGPWGDEPMEPREIVSLVKREALAGKKPFRPDMAVLKESPRIVQETVVAAWTEDPLNRPSLHQIKRKLKPLTIGLKRTIMDNMVSMIEKYTDKLEKDIAERNEELEGEKAKSEALLKMMLPEVVADSLKLGSNVSAESFENCTVFFSDCPGFVEMSATSKPIDIVQFLNDLYTVFDRIIDQFDVYKVETIADAYMVASGLPVPNGNHHAGEIASLGLALLKAVESFKIRHLPNEKVRLRIGMNSGPCVAGVVGLKMPRYCLFGDTVNTASRMESNGIPLRINCSGTAKEILDQLGGYEIEERGIVEMKGKGKQMTYFVRGENSDMRRERIIRERVKFASLKKAQIQEKTYEFS.

The first 17 residues, 1–17, serve as a signal peptide directing secretion; it reads MLSAVLLLLFFIQNVQN. At 18 to 490 the chain is on the extracellular side; that stretch reads FDKIELEDIT…ENCGPPANNT (473 aa). N-linked (GlcNAc...) asparagine glycosylation is found at asparagine 102, asparagine 296, asparagine 322, asparagine 346, asparagine 466, and asparagine 488. A helical membrane pass occupies residues 491-511; that stretch reads FIIVISVGVAVLIGLAIAAAF. Residues 512–1163 are Cytoplasmic-facing; it reads LYKRYRYERR…QIQEKTYEFS (652 aa). In terms of domain architecture, Protein kinase spans 587 to 882; it reads FNTGSTARAG…QIKRKLKPLT (296 aa). ATP contacts are provided by residues 593-601 and lysine 635; that span reads ARAGPFGPI. A coiled-coil region spans residues 901–930; it reads TDKLEKDIAERNEELEGEKAKSEALLKMML. The Guanylate cyclase domain occupies 953 to 1083; sequence TVFFSDCPGF…DTVNTASRME (131 aa).

This sequence belongs to the adenylyl cyclase class-4/guanylyl cyclase family. Expressed in ASG sensory neurons.

It is found in the cell membrane. It carries out the reaction GTP = 3',5'-cyclic GMP + diphosphate. Guanylate cyclase involved in the production of the second messenger cGMP. Plays a role in dauer formation. The chain is Receptor-type guanylate cyclase gcy-21 from Caenorhabditis elegans.